The following is a 251-amino-acid chain: Triosephosphate isomerase (251 aa).

9-11 contacts substrate; sequence NWK. His94 acts as the Electrophile in catalysis. Residue Glu163 is the Proton acceptor of the active site. Substrate is bound by residues Gly169, Ser209, and 230–231; that span reads GG.

This sequence belongs to the triosephosphate isomerase family. Homodimer.

It is found in the cytoplasm. The catalysed reaction is D-glyceraldehyde 3-phosphate = dihydroxyacetone phosphate. It functions in the pathway carbohydrate biosynthesis; gluconeogenesis. It participates in carbohydrate degradation; glycolysis; D-glyceraldehyde 3-phosphate from glycerone phosphate: step 1/1. Involved in the gluconeogenesis. Catalyzes stereospecifically the conversion of dihydroxyacetone phosphate (DHAP) to D-glyceraldehyde-3-phosphate (G3P). This Dehalococcoides mccartyi (strain ATCC BAA-2266 / KCTC 15142 / 195) (Dehalococcoides ethenogenes (strain 195)) protein is Triosephosphate isomerase.